A 43-amino-acid chain; its full sequence is Potassium channel toxin gamma-KTx 4.5 (43 aa).

Intrachain disulfides connect cysteine 5–cysteine 23, cysteine 11–cysteine 34, cysteine 20–cysteine 39, and cysteine 24–cysteine 41.

The protein belongs to the ergtoxin family. Gamma-KTx 4 subfamily. As to expression, expressed by the venom gland.

The protein localises to the secreted. Functionally, reversibly blocks Kv11/ERG potassium channels. The polypeptide is Potassium channel toxin gamma-KTx 4.5 (Centruroides exilicauda (Bark scorpion)).